A 433-amino-acid chain; its full sequence is MTASLKAIDGAADPGAELAAMMTALGAQARAAARVLAIAPTAQKNEALAAMERAIRAHTPAILQANAEDVAEARAGGATDAFIDRLTLTEARVAVMADGIGVIHDIADPVGQVTERWQRPNGMTIERVRVPLGVIAVIFESRPNVAADAGVLALKSGNAVILRGGSDSFRSCRAIHDCLVEGLREAGLPEAAITRVPVRDRAAVGLLLGGLDGNVDVIVPRGGKSLVARVEAEARVPVFAHLEGINHVYVDRAADLDMAKSIVLNAKMRRPGVCGAAETLLIDRAAASNLAPLVTTLLEAGCEVRGDDAVQRVDPRVKPVAEEDWDTEYEAAIMSVKLVDGVDAALAHIAQHGSHHTEAIVTADQSVASKFLNEVDAAIVLHNASTQFADGGEFGFGAEIGIATGKFHARGPVGAEQLTSFKYRVHGTGQIRP.

Belongs to the gamma-glutamyl phosphate reductase family.

The protein localises to the cytoplasm. The catalysed reaction is L-glutamate 5-semialdehyde + phosphate + NADP(+) = L-glutamyl 5-phosphate + NADPH + H(+). The protein operates within amino-acid biosynthesis; L-proline biosynthesis; L-glutamate 5-semialdehyde from L-glutamate: step 2/2. Catalyzes the NADPH-dependent reduction of L-glutamate 5-phosphate into L-glutamate 5-semialdehyde and phosphate. The product spontaneously undergoes cyclization to form 1-pyrroline-5-carboxylate. This Rhodopseudomonas palustris (strain BisB18) protein is Gamma-glutamyl phosphate reductase.